The primary structure comprises 79 residues: Small ribosomal subunit protein uS17 (79 aa).

The protein belongs to the universal ribosomal protein uS17 family. In terms of assembly, part of the 30S ribosomal subunit.

In terms of biological role, one of the primary rRNA binding proteins, it binds specifically to the 5'-end of 16S ribosomal RNA. In Roseobacter denitrificans (strain ATCC 33942 / OCh 114) (Erythrobacter sp. (strain OCh 114)), this protein is Small ribosomal subunit protein uS17.